The chain runs to 100 residues: Large ribosomal subunit protein uL23 (100 aa).

The protein belongs to the universal ribosomal protein uL23 family. In terms of assembly, part of the 50S ribosomal subunit. Contacts protein L29, and trigger factor when it is bound to the ribosome.

In terms of biological role, one of the early assembly proteins it binds 23S rRNA. One of the proteins that surrounds the polypeptide exit tunnel on the outside of the ribosome. Forms the main docking site for trigger factor binding to the ribosome. The sequence is that of Large ribosomal subunit protein uL23 from Acaryochloris marina (strain MBIC 11017).